Reading from the N-terminus, the 497-residue chain is Glycerol kinase (497 aa).

Threonine 12 contacts ADP. ATP is bound by residues threonine 12, threonine 13, and serine 14. Threonine 12 provides a ligand contact to sn-glycerol 3-phosphate. Arginine 16 contacts ADP. Sn-glycerol 3-phosphate contacts are provided by arginine 82, glutamate 83, tyrosine 134, and aspartate 243. Residues arginine 82, glutamate 83, tyrosine 134, aspartate 243, and glutamine 244 each contribute to the glycerol site. Residues threonine 265 and glycine 308 each contribute to the ADP site. Residues threonine 265, glycine 308, glutamine 312, and glycine 409 each contribute to the ATP site. The ADP site is built by glycine 409 and asparagine 413.

Belongs to the FGGY kinase family.

The enzyme catalyses glycerol + ATP = sn-glycerol 3-phosphate + ADP + H(+). It participates in polyol metabolism; glycerol degradation via glycerol kinase pathway; sn-glycerol 3-phosphate from glycerol: step 1/1. Its activity is regulated as follows. Inhibited by fructose 1,6-bisphosphate (FBP). Its function is as follows. Key enzyme in the regulation of glycerol uptake and metabolism. Catalyzes the phosphorylation of glycerol to yield sn-glycerol 3-phosphate. The protein is Glycerol kinase of Nitratidesulfovibrio vulgaris (strain ATCC 29579 / DSM 644 / CCUG 34227 / NCIMB 8303 / VKM B-1760 / Hildenborough) (Desulfovibrio vulgaris).